Consider the following 387-residue polypeptide: Pyrophosphate--fructose 6-phosphate 1-phosphotransferase 3 (387 aa).

A diphosphate-binding site is contributed by Gly-15. Asp-114 provides a ligand contact to Mg(2+). Residues 140-142 (TID), 186-188 (MGR), Glu-247, and 308-311 (YELR) each bind substrate. Catalysis depends on Asp-142, which acts as the Proton acceptor.

The protein belongs to the phosphofructokinase type A (PFKA) family. PPi-dependent PFK group II subfamily. Clade 'Short' sub-subfamily. As to quaternary structure, homotetramer. It depends on Mg(2+) as a cofactor.

The protein resides in the cytoplasm. It catalyses the reaction beta-D-fructose 6-phosphate + diphosphate = beta-D-fructose 1,6-bisphosphate + phosphate + H(+). Its pathway is carbohydrate degradation; glycolysis; D-glyceraldehyde 3-phosphate and glycerone phosphate from D-glucose: step 3/4. With respect to regulation, non-allosteric. In terms of biological role, catalyzes the phosphorylation of D-fructose 6-phosphate, the first committing step of glycolysis. Uses inorganic phosphate (PPi) as phosphoryl donor instead of ATP like common ATP-dependent phosphofructokinases (ATP-PFKs), which renders the reaction reversible, and can thus function both in glycolysis and gluconeogenesis. Consistently, PPi-PFK can replace the enzymes of both the forward (ATP-PFK) and reverse (fructose-bisphosphatase (FBPase)) reactions. The sequence is that of Pyrophosphate--fructose 6-phosphate 1-phosphotransferase 3 (pfk3) from Trichomonas vaginalis (strain ATCC PRA-98 / G3).